The following is a 233-amino-acid chain: Demethylmenaquinone methyltransferase (233 aa).

S-adenosyl-L-methionine contacts are provided by residues threonine 60, aspartate 81, and 106–107 (DA).

It belongs to the class I-like SAM-binding methyltransferase superfamily. MenG/UbiE family.

It carries out the reaction a 2-demethylmenaquinol + S-adenosyl-L-methionine = a menaquinol + S-adenosyl-L-homocysteine + H(+). It participates in quinol/quinone metabolism; menaquinone biosynthesis; menaquinol from 1,4-dihydroxy-2-naphthoate: step 2/2. Functionally, methyltransferase required for the conversion of demethylmenaquinol (DMKH2) to menaquinol (MKH2). This Staphylococcus saprophyticus subsp. saprophyticus (strain ATCC 15305 / DSM 20229 / NCIMB 8711 / NCTC 7292 / S-41) protein is Demethylmenaquinone methyltransferase.